The primary structure comprises 273 residues: Dermonecrotic toxin LspaSicTox-alphaIA2i (273 aa).

Residue histidine 5 is part of the active site. The Mg(2+) site is built by glutamate 25 and aspartate 27. Catalysis depends on histidine 41, which acts as the Nucleophile. Intrachain disulfides connect cysteine 45-cysteine 51 and cysteine 47-cysteine 190. A Mg(2+)-binding site is contributed by aspartate 85.

It belongs to the arthropod phospholipase D family. Class II subfamily. Mg(2+) is required as a cofactor. As to expression, expressed by the venom gland.

The protein localises to the secreted. The enzyme catalyses an N-(acyl)-sphingosylphosphocholine = an N-(acyl)-sphingosyl-1,3-cyclic phosphate + choline. It carries out the reaction an N-(acyl)-sphingosylphosphoethanolamine = an N-(acyl)-sphingosyl-1,3-cyclic phosphate + ethanolamine. The catalysed reaction is a 1-acyl-sn-glycero-3-phosphocholine = a 1-acyl-sn-glycero-2,3-cyclic phosphate + choline. It catalyses the reaction a 1-acyl-sn-glycero-3-phosphoethanolamine = a 1-acyl-sn-glycero-2,3-cyclic phosphate + ethanolamine. Dermonecrotic toxins cleave the phosphodiester linkage between the phosphate and headgroup of certain phospholipids (sphingolipid and lysolipid substrates), forming an alcohol (often choline) and a cyclic phosphate. This toxin acts on sphingomyelin (SM). It may also act on ceramide phosphoethanolamine (CPE), lysophosphatidylcholine (LPC) and lysophosphatidylethanolamine (LPE), but not on lysophosphatidylserine (LPS), and lysophosphatidylglycerol (LPG). It acts by transphosphatidylation, releasing exclusively cyclic phosphate products as second products. Induces dermonecrosis, hemolysis, increased vascular permeability, edema, inflammatory response, and platelet aggregation. The sequence is that of Dermonecrotic toxin LspaSicTox-alphaIA2i from Loxosceles spadicea (Recluse spider).